The following is a 201-amino-acid chain: Small ribosomal subunit protein uS4 (201 aa).

In terms of domain architecture, S4 RNA-binding spans 91–151 (SRLDNVVYRA…EKSQKMNWFE (61 aa)).

This sequence belongs to the universal ribosomal protein uS4 family. In terms of assembly, part of the 30S ribosomal subunit. Contacts protein S5. The interaction surface between S4 and S5 is involved in control of translational fidelity.

In terms of biological role, one of the primary rRNA binding proteins, it binds directly to 16S rRNA where it nucleates assembly of the body of the 30S subunit. Functionally, with S5 and S12 plays an important role in translational accuracy. In Corynebacterium efficiens (strain DSM 44549 / YS-314 / AJ 12310 / JCM 11189 / NBRC 100395), this protein is Small ribosomal subunit protein uS4.